Reading from the N-terminus, the 341-residue chain is Ferrochelatase (341 aa).

Fe cation contacts are provided by His-189 and Glu-293.

This sequence belongs to the ferrochelatase family.

Its subcellular location is the cytoplasm. It catalyses the reaction heme b + 2 H(+) = protoporphyrin IX + Fe(2+). It functions in the pathway porphyrin-containing compound metabolism; protoheme biosynthesis; protoheme from protoporphyrin-IX: step 1/1. Functionally, catalyzes the ferrous insertion into protoporphyrin IX. The chain is Ferrochelatase from Pseudomonas fluorescens (strain Pf0-1).